Reading from the N-terminus, the 231-residue chain is 4-hydroxy-tetrahydrodipicolinate reductase (231 aa).

NAD(+)-binding positions include D33, 68 to 70 (CTT), and 92 to 95 (SSNT). Catalysis depends on H124, which acts as the Proton donor/acceptor. H125 is a (S)-2,3,4,5-tetrahydrodipicolinate binding site. Catalysis depends on K128, which acts as the Proton donor. 134-135 (GT) is a (S)-2,3,4,5-tetrahydrodipicolinate binding site.

Belongs to the DapB family.

It localises to the cytoplasm. The catalysed reaction is (S)-2,3,4,5-tetrahydrodipicolinate + NAD(+) + H2O = (2S,4S)-4-hydroxy-2,3,4,5-tetrahydrodipicolinate + NADH + H(+). It catalyses the reaction (S)-2,3,4,5-tetrahydrodipicolinate + NADP(+) + H2O = (2S,4S)-4-hydroxy-2,3,4,5-tetrahydrodipicolinate + NADPH + H(+). The protein operates within amino-acid biosynthesis; L-lysine biosynthesis via DAP pathway; (S)-tetrahydrodipicolinate from L-aspartate: step 4/4. Functionally, catalyzes the conversion of 4-hydroxy-tetrahydrodipicolinate (HTPA) to tetrahydrodipicolinate. The polypeptide is 4-hydroxy-tetrahydrodipicolinate reductase (Brachyspira hyodysenteriae (strain ATCC 49526 / WA1)).